A 297-amino-acid chain; its full sequence is Ectoine dioxygenase (297 aa).

Gln131 is a binding site for L-ectoine. 2-oxoglutarate is bound at residue Lys137. Fe cation-binding residues include His148, Asp150, and His249.

It belongs to the PhyH family. EctD subfamily. In terms of assembly, homodimer. It depends on Fe(2+) as a cofactor.

It catalyses the reaction L-ectoine + 2-oxoglutarate + O2 = 5-hydroxyectoine + succinate + CO2. Its function is as follows. Involved in the biosynthesis of 5-hydroxyectoine, called compatible solute, which helps organisms to survive extreme osmotic stress by acting as a highly soluble organic osmolyte. Catalyzes the 2-oxoglutarate-dependent selective hydroxylation of L-ectoine to yield (4S,5S)-5-hydroxyectoine. The protein is Ectoine dioxygenase of Streptomyces anulatus (Streptomyces chrysomallus).